The following is a 287-amino-acid chain: Urease accessory protein UreD (287 aa).

The protein belongs to the UreD family. In terms of assembly, ureD, UreF and UreG form a complex that acts as a GTP-hydrolysis-dependent molecular chaperone, activating the urease apoprotein by helping to assemble the nickel containing metallocenter of UreC. The UreE protein probably delivers the nickel.

The protein resides in the cytoplasm. Its function is as follows. Required for maturation of urease via the functional incorporation of the urease nickel metallocenter. The chain is Urease accessory protein UreD from Aliivibrio fischeri (strain MJ11) (Vibrio fischeri).